The primary structure comprises 354 residues: Probable L-ascorbate-6-phosphate lactonase UlaG (354 aa).

This sequence belongs to the UlaG family. Requires a divalent metal cation as cofactor.

It localises to the cytoplasm. It carries out the reaction L-ascorbate 6-phosphate + H2O = 3-dehydro-L-gulonate 6-phosphate. The protein operates within cofactor degradation; L-ascorbate degradation; D-xylulose 5-phosphate from L-ascorbate: step 1/4. Its function is as follows. Probably catalyzes the hydrolysis of L-ascorbate-6-P into 3-keto-L-gulonate-6-P. Is essential for L-ascorbate utilization under anaerobic conditions. This chain is Probable L-ascorbate-6-phosphate lactonase UlaG, found in Escherichia coli O127:H6 (strain E2348/69 / EPEC).